The primary structure comprises 193 residues: Proton-translocating ferredoxin:NAD(+) oxidoreductase complex subunit A (193 aa).

6 helical membrane-spanning segments follow: residues 11–31, 39–59, 62–82, 102–122, 134–154, and 171–191; these read AVVVNNYVLTRFLGLCIFFGV, VGMGMAVTSVITMSSILAWVV, FVLIPFNLTFLKTVVFVLLIA, MWGIYLLLIATNCIVLAVPIL, VVNAIGSGLGFAMAIILMASL, and GVAFILAGMLALAFLGFSGMI.

Belongs to the NqrDE/RnfAE family. The complex is composed of six subunits: RnfA, RnfB, RnfC, RnfD, RnfE and RnfG.

The protein localises to the cell membrane. Functionally, part of a membrane-bound complex that couples electron transfer with translocation of ions across the membrane. Couples electron transfer from reduced ferredoxin to NAD(+) with translocation of H(+) out of the cell. Essential for energy conservation during autotrophic growth. Contributes to ATP synthesis during heterotrophic growth. This Clostridium ljungdahlii (strain ATCC 55383 / DSM 13528 / PETC) protein is Proton-translocating ferredoxin:NAD(+) oxidoreductase complex subunit A.